The following is a 77-amino-acid chain: MFNNKGRRNVRNNEVRRNVPVKEGETYTVTIEDMGRGGDGIARVEGFVVFVPETQKGETVNVKITAVKSKFAFAEKI.

Residues 1 to 10 are compositionally biased toward basic residues; the sequence is MFNNKGRRNV. The interval 1-21 is disordered; sequence MFNNKGRRNVRNNEVRRNVPV. Over residues 11–21 the composition is skewed to basic and acidic residues; sequence RNNEVRRNVPV. The TRAM domain occupies 20–77; that stretch reads PVKEGETYTVTIEDMGRGGDGIARVEGFVVFVPETQKGETVNVKITAVKSKFAFAEKI.

This is an uncharacterized protein from Methanocaldococcus jannaschii (strain ATCC 43067 / DSM 2661 / JAL-1 / JCM 10045 / NBRC 100440) (Methanococcus jannaschii).